Reading from the N-terminus, the 420-residue chain is Succinate--CoA ligase [GDP-forming] subunit beta, mitochondrial (420 aa).

The region spanning 35-263 (KSLMDKYGVN…NASFRQKEIF (229 aa)) is the ATP-grasp domain. Residues Gln-46, 78 to 80 (GRG), and Val-135 each bind GTP. The Mg(2+) site is built by Asn-232 and Asp-246. Substrate is bound by residues Asn-297 and 354-356 (GIM).

This sequence belongs to the succinate/malate CoA ligase beta subunit family. GTP-specific subunit beta subfamily. Heterodimer of an alpha and a beta subunit. The beta subunit determines specificity for GTP. Mg(2+) serves as cofactor.

The protein localises to the mitochondrion. It catalyses the reaction GTP + succinate + CoA = succinyl-CoA + GDP + phosphate. It functions in the pathway carbohydrate metabolism; tricarboxylic acid cycle; succinate from succinyl-CoA (ligase route): step 1/1. GTP-specific succinyl-CoA synthetase functions in the citric acid cycle (TCA), coupling the hydrolysis of succinyl-CoA to the synthesis of GTP and thus represents the only step of substrate-level phosphorylation in the TCA. The beta subunit provides nucleotide specificity of the enzyme and binds the substrate succinate, while the binding sites for coenzyme A and phosphate are found in the alpha subunit. In Dictyostelium discoideum (Social amoeba), this protein is Succinate--CoA ligase [GDP-forming] subunit beta, mitochondrial (scsB).